The primary structure comprises 499 residues: MMVAWWSLFLYGLQVAAPALAATPADWRSQSIYFLLTDRFARTDGSTTATCNTADRKYCGGTWQGIIDKLDYIQGMGFTAIWITPVTAQLPQTTAYGDAYHGYWQQDIYSLNENYGTADDLKALSSALHERGMYLMVDVVANHMGYDGAGSSVDYSVFKPFSSQDYFHPFCLIQNYEDQTQVEDCWLGDNTVSLPDLDTTKDVVKNEWYDWVGSLVSNYSIDGLRIDTVKHVQKDFWPGYNKAAGVYCIGEVLDGDPAYTCPYQNVMDGVLNYPIYYPLLNAFKSTSGSMDDLYNMINTVKSDCPDSTLLGTFVENHDNPRFASYTNDIALAKNVAAFIILNDGIPIIYAGQEQHYAGGNDPANREATWLSGYPTDSELYKLIASANAIRNYAISKDTGFVTYKNWPIYKDDTTIAMRKGTDGSQIVTILSNKGASGDSYTLSLSGAGYTAGQQLTEVIGCTTVTVGSDGNVPVPMAGGLPRVLYPTEKLAGSKICSSS.

Positions 1–21 (MMVAWWSLFLYGLQVAAPALA) are cleaved as a signal peptide. A disulfide bridge links cysteine 51 with cysteine 59. Tryptophan 104 contacts substrate. Position 142 (asparagine 142) interacts with Ca(2+). Histidine 143 contributes to the substrate binding site. Cysteine 171 and cysteine 185 form a disulfide bridge. Ca(2+) contacts are provided by glutamate 183 and aspartate 196. N-linked (GlcNAc...) asparagine glycosylation occurs at asparagine 218. Arginine 225 contributes to the substrate binding site. Aspartate 227, histidine 231, and glutamate 251 together coordinate Ca(2+). Residue aspartate 227 is the Nucleophile of the active site. 230–231 (KH) serves as a coordination point for substrate. The active-site Proton donor is glutamate 251. Glycine 255 serves as a coordination point for substrate. The cysteines at positions 261 and 304 are disulfide-linked. Substrate is bound at residue arginine 365. The cysteines at positions 461 and 496 are disulfide-linked.

Belongs to the glycosyl hydrolase 13 family. As to quaternary structure, monomer. Ca(2+) serves as cofactor.

It is found in the secreted. It catalyses the reaction Endohydrolysis of (1-&gt;4)-alpha-D-glucosidic linkages in polysaccharides containing three or more (1-&gt;4)-alpha-linked D-glucose units.. The polypeptide is Alpha-amylase A type-3 (amy3) (Aspergillus oryzae (strain ATCC 42149 / RIB 40) (Yellow koji mold)).